Here is a 338-residue protein sequence, read N- to C-terminus: Large ribosomal subunit protein uL10 (338 aa).

The tract at residues I302–G338 is disordered. The segment covering E310 to A329 has biased composition (acidic residues).

The protein belongs to the universal ribosomal protein uL10 family. In terms of assembly, part of the 50S ribosomal subunit. Forms part of the ribosomal stalk which helps the ribosome interact with GTP-bound translation factors. Forms a heptameric L10(L12)2(L12)2(L12)2 complex, where L10 forms an elongated spine to which the L12 dimers bind in a sequential fashion.

In terms of biological role, forms part of the ribosomal stalk, playing a central role in the interaction of the ribosome with GTP-bound translation factors. The chain is Large ribosomal subunit protein uL10 from Thermococcus sibiricus (strain DSM 12597 / MM 739).